Here is a 352-residue protein sequence, read N- to C-terminus: Ketoisovalerate oxidoreductase subunit VorB (352 aa).

As to quaternary structure, heterotrimer of the VorA, VorB and VorC subunits.

It catalyses the reaction 3-methyl-2-oxobutanoate + 2 oxidized [2Fe-2S]-[ferredoxin] + CoA = 2-methylpropanoyl-CoA + 2 reduced [2Fe-2S]-[ferredoxin] + CO2 + H(+). This is Ketoisovalerate oxidoreductase subunit VorB (vorB) from Methanothermobacter thermautotrophicus (strain ATCC 29096 / DSM 1053 / JCM 10044 / NBRC 100330 / Delta H) (Methanobacterium thermoautotrophicum).